The primary structure comprises 273 residues: 5-deoxy-glucuronate isomerase (273 aa).

This sequence belongs to the isomerase IolB family.

The catalysed reaction is 5-deoxy-D-glucuronate = 5-dehydro-2-deoxy-D-gluconate. It participates in polyol metabolism; myo-inositol degradation into acetyl-CoA; acetyl-CoA from myo-inositol: step 4/7. In terms of biological role, involved in the isomerization of 5-deoxy-glucuronate (5DG) to 5-dehydro-2-deoxy-D-gluconate (DKG or 2-deoxy-5-keto-D-gluconate). In Listeria innocua serovar 6a (strain ATCC BAA-680 / CLIP 11262), this protein is 5-deoxy-glucuronate isomerase.